The sequence spans 2238 residues: Protein Ycf2 (2238 aa).

1579-1586 serves as a coordination point for ATP; the sequence is GSIGTGRS.

The protein belongs to the Ycf2 family.

Its subcellular location is the plastid. Its function is as follows. Probable ATPase of unknown function. Its presence in a non-photosynthetic plant (Epifagus virginiana) and experiments in tobacco indicate that it has an essential function which is probably not related to photosynthesis. The sequence is that of Protein Ycf2 from Cuscuta exaltata (Tall dodder).